Here is a 296-residue protein sequence, read N- to C-terminus: Biliverdin reductase A (296 aa).

Positions 1-2 (MN) are excised as a propeptide. Residues 16–19 (VGRA), 44–46 (SRR), 77–80 (SSSH), and Tyr-98 each bind NADP(+). Thr-174 is subject to Phosphothreonine. Ser-178 and Ser-230 each carry phosphoserine. N6-acetyllysine is present on residues Lys-248 and Lys-253. Zn(2+)-binding residues include His-280, Cys-281, Cys-292, and Cys-293.

The protein belongs to the Gfo/Idh/MocA family. Biliverdin reductase subfamily. As to quaternary structure, monomer. Zn(2+) is required as a cofactor. As to expression, liver.

Its subcellular location is the cytoplasm. The protein localises to the cytosol. It carries out the reaction (4Z,15Z)-bilirubin IXalpha + NAD(+) = biliverdin IXalpha + NADH + H(+). The enzyme catalyses (4Z,15Z)-bilirubin IXalpha + NADP(+) = biliverdin IXalpha + NADPH + H(+). It participates in porphyrin-containing compound metabolism; protoheme degradation. In terms of biological role, reduces the gamma-methene bridge of the open tetrapyrrole, biliverdin IXalpha, to bilirubin with the concomitant oxidation of a NADH or NADPH cofactor. Does not reduce bilirubin IXbeta. Uses the reactants NADH or NADPH depending on the pH; NADH is used at the acidic pH range (6-6.9) and NADPH at the alkaline range (8.5-8.7). NADPH, however, is the probable reactant in biological systems. The chain is Biliverdin reductase A from Homo sapiens (Human).